A 56-amino-acid polypeptide reads, in one-letter code: Potassium channel toxin alpha-KTx 9.1 (56 aa).

A signal peptide spans 1 to 28 (MSRLFTLVLIVLAMNVMMAIISDPVVEA). Cystine bridges form between Cys-31-Cys-47, Cys-34-Cys-52, and Cys-38-Cys-54.

Expressed by the venom gland.

It localises to the secreted. Blocks small conductance calcium-activated potassium channels (KCNN, SK). Weakly inhibits the Kv7.1/KCNQ1 channel (10 uM of the toxin inhibits currents by 23.3%). Low toxicity by intracerebroventricular injection into mice. The sequence is that of Potassium channel toxin alpha-KTx 9.1 from Olivierus martensii (Manchurian scorpion).